The primary structure comprises 100 residues: Large ribosomal subunit protein bL27 (100 aa).

Positions 1 to 9 (MLVMNLQLF) are excised as a propeptide.

It belongs to the bacterial ribosomal protein bL27 family. In terms of processing, the N-terminus is cleaved by ribosomal processing cysteine protease Prp.

The polypeptide is Large ribosomal subunit protein bL27 (Clostridium botulinum (strain Hall / ATCC 3502 / NCTC 13319 / Type A)).